Reading from the N-terminus, the 142-residue chain is Putative pre-16S rRNA nuclease (142 aa).

This sequence belongs to the YqgF nuclease family.

The protein resides in the cytoplasm. In terms of biological role, could be a nuclease involved in processing of the 5'-end of pre-16S rRNA. In Lactobacillus helveticus (strain DPC 4571), this protein is Putative pre-16S rRNA nuclease.